Consider the following 813-residue polypeptide: Nuclear pore complex protein 5 (813 aa).

It belongs to the nucleoporin Nup84/Nup107 family. As to quaternary structure, part of the nuclear pore complex (NPC). May interact with mdf-1.

Its subcellular location is the nucleus. It is found in the nuclear pore complex. It localises to the chromosome. The protein localises to the centromere. The protein resides in the kinetochore. Its subcellular location is the nucleus membrane. Its function is as follows. Involved in kinetochore assembly and chromosome segregation during embryonic mitosis. Required for the localization of the NDC80 complex member him-10, the chromosomal passenger complex component air-2 and nuclear pore complex proteins npp-23 and npp-15 to kinetochores during metaphase. Required for npp-23 localization to the nuclear envelope during interphase. Recruits mdf-1, a component of the spindle assembly checkpoint, to the nuclear envelope. Appears dispensable for the assembly of the nuclear pore complex and for nuclear protein import. The chain is Nuclear pore complex protein 5 from Caenorhabditis elegans.